Reading from the N-terminus, the 465-residue chain is UDP-N-acetylmuramoylalanine--D-glutamate ligase (465 aa).

116 to 122 (GTNGKTT) is an ATP binding site.

Belongs to the MurCDEF family.

The protein resides in the cytoplasm. The catalysed reaction is UDP-N-acetyl-alpha-D-muramoyl-L-alanine + D-glutamate + ATP = UDP-N-acetyl-alpha-D-muramoyl-L-alanyl-D-glutamate + ADP + phosphate + H(+). Its pathway is cell wall biogenesis; peptidoglycan biosynthesis. Its function is as follows. Cell wall formation. Catalyzes the addition of glutamate to the nucleotide precursor UDP-N-acetylmuramoyl-L-alanine (UMA). The protein is UDP-N-acetylmuramoylalanine--D-glutamate ligase of Thermobifida fusca (strain YX).